Here is a 506-residue protein sequence, read N- to C-terminus: GTPase Der (506 aa).

2 EngA-type G domains span residues 3-166 (PVVA…GEQL) and 218-391 (IKIA…ACAT). GTP-binding positions include 9 to 16 (GRPNVGKS), 56 to 60 (DTGGI), 118 to 121 (NKTD), 224 to 231 (GRPNVGKS), 271 to 275 (DTAGV), and 336 to 339 (NKWD). The 85-residue stretch at 392–476 (QKNSTSMLTR…PIRIQFQEGN (85 aa)) folds into the KH-like domain.

Belongs to the TRAFAC class TrmE-Era-EngA-EngB-Septin-like GTPase superfamily. EngA (Der) GTPase family. In terms of assembly, associates with the 50S ribosomal subunit.

GTPase that plays an essential role in the late steps of ribosome biogenesis. The polypeptide is GTPase Der (Actinobacillus pleuropneumoniae serotype 7 (strain AP76)).